A 484-amino-acid polypeptide reads, in one-letter code: Glutamate--tRNA ligase (484 aa).

The 'HIGH' region motif lies at Pro11 to Asn21. The 'KMSKS' region motif lies at Lys255–Arg259. An ATP-binding site is contributed by Lys258.

It belongs to the class-I aminoacyl-tRNA synthetase family. Glutamate--tRNA ligase type 1 subfamily. Monomer.

It localises to the cytoplasm. It carries out the reaction tRNA(Glu) + L-glutamate + ATP = L-glutamyl-tRNA(Glu) + AMP + diphosphate. In terms of biological role, catalyzes the attachment of glutamate to tRNA(Glu) in a two-step reaction: glutamate is first activated by ATP to form Glu-AMP and then transferred to the acceptor end of tRNA(Glu). The sequence is that of Glutamate--tRNA ligase from Streptococcus thermophilus (strain CNRZ 1066).